We begin with the raw amino-acid sequence, 176 residues long: Vitamin K epoxide reductase complex subunit 1-like protein 1 (176 aa).

The Cytoplasmic portion of the chain corresponds to 1–13 (MAAPVLLRVSVPR). Residues 14 to 36 (WERVARYAVCAAGILLSIYAYHV) traverse the membrane as a helical segment. At 37–87 (EREKERDPEHRALCDLGPWVKCSAALASRWGRGFGLLGSIFGKDGVLNQPN) the chain is on the lumenal side. Cysteine 50 and cysteine 58 are disulfide-bonded. Asparagine 87 provides a ligand contact to (S)-warfarin. A helical transmembrane segment spans residues 88–102 (SVFGLIFYILQLLLG). Residues 103 to 107 (MTASA) lie on the Cytoplasmic side of the membrane. A helical transmembrane segment spans residues 108 to 135 (VAALVLMTSSIVSVVGSLYLAYILYFVL). The Lumenal segment spans residues 136 to 138 (KEF). The cysteines at positions 139 and 142 are disulfide-linked. Residues 139 to 160 (CIICVTTYVLNFLLLIINYKRL) form a helical membrane-spanning segment. Residues cysteine 142 and tyrosine 146 each coordinate phylloquinone. Residue tyrosine 146 participates in (S)-warfarin binding. Residues 161-176 (VYLNEAWKRQLQPKED) lie on the Cytoplasmic side of the membrane.

The protein belongs to the VKOR family. In terms of tissue distribution, detected in testis and lung.

The protein localises to the endoplasmic reticulum membrane. The catalysed reaction is phylloquinone + [protein]-disulfide + H2O = 2,3-epoxyphylloquinone + [protein]-dithiol. The enzyme catalyses phylloquinol + [protein]-disulfide = phylloquinone + [protein]-dithiol. Its activity is regulated as follows. Inhibited by warfarin (coumadin). Warfarin locks VKORC1 in both redox states into the closed conformation. Involved in vitamin K metabolism. Can reduce inactive vitamin K 2,3-epoxide to active vitamin K, and may contribute to vitamin K-mediated protection against oxidative stress. Plays a role in vitamin K-dependent gamma-carboxylation of Glu residues in target proteins. This chain is Vitamin K epoxide reductase complex subunit 1-like protein 1 (Vkorc1l1), found in Mus musculus (Mouse).